A 340-amino-acid polypeptide reads, in one-letter code: Cytosolic Fe-S cluster assembly factor NBP35 (340 aa).

Residues C31, C45, C48, and C54 each contribute to the [4Fe-4S] cluster site. 84-91 contributes to the ATP binding site; the sequence is GKGGVGKS. [4Fe-4S] cluster is bound by residues C257 and C260.

It belongs to the Mrp/NBP35 ATP-binding proteins family. NUBP1/NBP35 subfamily. As to quaternary structure, heterotetramer of 2 NBP35 and 2 CFD1 chains. Requires [4Fe-4S] cluster as cofactor.

Its subcellular location is the cytoplasm. In terms of biological role, component of the cytosolic iron-sulfur (Fe/S) protein assembly (CIA) machinery. Required for maturation of extramitochondrial Fe-S proteins. The NBP35-CFD1 heterotetramer forms a Fe-S scaffold complex, mediating the de novo assembly of an Fe-S cluster and its transfer to target apoproteins. This chain is Cytosolic Fe-S cluster assembly factor NBP35, found in Phaeosphaeria nodorum (strain SN15 / ATCC MYA-4574 / FGSC 10173) (Glume blotch fungus).